The primary structure comprises 451 residues: Golgi reassembly-stacking protein 2 (451 aa).

The N-myristoyl glycine moiety is linked to residue glycine 2. PDZ GRASP-type domains lie at 15–105 (EGYH…FCSF) and 111–199 (NVWH…YGYL). Residues 15-215 (EGYHVLRVQE…PFEEGKKISL (201 aa)) are GRASP. A dimethylated arginine mark is found at arginine 30 and arginine 47. The tract at residues 194 to 199 (IGYGYL) is important for membrane binding. A Phosphoserine modification is found at serine 214. At threonine 222 the chain carries Phosphothreonine. Threonine 225 carries the post-translational modification Phosphothreonine; by MAPK. Positions 236–252 (LSSVSPPSLSPPGTTGV) are enriched in low complexity. Disordered stretches follow at residues 236–255 (LSSVSPPSLSPPGTTGVEQS) and 377–451 (EGSS…SEPS). The segment covering 410-424 (SSLTVDVTSPASKVP) has biased composition (polar residues). Serine 411 is modified (phosphoserine). Residues threonine 417 and threonine 435 each carry the phosphothreonine modification. A phosphoserine mark is found at serine 443 and serine 448.

Belongs to the GORASP family. As to quaternary structure, homodimer. Homooligomer. ER stress induces phosphorylation-dependent monomerization. Interacts with BLZF1/Golgin 45. Identified in a complex with RAB2 and GORASP2. Interacts with JAM2 and JAM3. Interacts with members of the p24 cargo receptors. Interacts with CNIH and the cytoplasmic domain of transmembrane TGFA, prior its transit in the trans-Golgi. Interacts with KCTD5. Interacts with TMED2 and TMED3. Interacts with SEC16A in response to ER stress. Interacts (via PDZ GRASP-type 1 domain) with core-glycosylated CFTR in response to ER stress. In terms of processing, myristoylated. Myristoylation is essential for the Golgi targeting. Palmitoylated. Post-translationally, phosphorylated in mitotic cells. ER stress-induced phosphorylation at Ser-443 induces monomerization and subsequent relocalization from Golgi to ER which is essential for mediating unconventional (ER/Golgi-independent) trafficking of CFTR to the cell membrane. As to expression, detected in lung, heart and testis. Colocalized in a polarized fashion in the acrosome region with JAM3 in round spermatids (at protein level).

It localises to the golgi apparatus membrane. The protein localises to the endoplasmic reticulum membrane. It is found in the golgi apparatus. Functionally, key structural protein of the Golgi apparatus. The membrane cisternae of the Golgi apparatus adhere to each other to form stacks, which are aligned side by side to form the Golgi ribbon. Acting in concert with GORASP1/GRASP65, is required for the formation and maintenance of the Golgi ribbon, and may be dispensable for the formation of stacks. However, other studies suggest that GORASP2 plays a role in assembly and membrane stacking of the Golgi cisternae, and in the process by which Golgi stacks reform after breakdown during mitosis and meiosis. May regulate the intracellular transport and presentation of a defined set of transmembrane proteins, such as transmembrane TGFA. Required for normal acrosome formation during spermiogenesis and normal male fertility, probably by promoting colocalization of JAM2 and JAM3 at contact sites between germ cells and Sertoli cells. Mediates ER stress-induced unconventional (ER/Golgi-independent) trafficking of core-glycosylated CFTR to cell membrane. This is Golgi reassembly-stacking protein 2 (Gorasp2) from Mus musculus (Mouse).